The chain runs to 263 residues: Lens fiber major intrinsic protein (263 aa).

Residues 1–9 (MWELRSASF) are Cytoplasmic-facing. Residues 10–29 (WRAIFAEFFATLFYVFFGLG) traverse the membrane as a helical segment. Residues 30–41 (ASLRWTPGPLHV) are Extracellular-facing. A helical transmembrane segment spans residues 42–59 (LQVALAFGLALATLVQAV). Topologically, residues 60 to 61 (GH) are cytoplasmic. An intramembrane region (discontinuously helical) is located at residues 62–77 (ISGAHVNPAVTFAFLV). The NPA 1 motif lies at 68–70 (NPA). Over 78 to 82 (GSQMS) the chain is Cytoplasmic. The helical transmembrane segment at 83–106 (LLRAFCYMAAQLLGAVAGAAVLYS) threads the bilayer. Topologically, residues 107–127 (VTPPAVRGNLALNTLHPGVSV) are extracellular. A helical membrane pass occupies residues 128-148 (GQATTVEIFLTLQFVLCIFAT). Over 149–156 (YDERRNGR) the chain is Cytoplasmic. The chain crosses the membrane as a helical span at residues 157 to 175 (LGSVALAVGFSLTLGHLFG). Residues 176 to 178 (MYY) lie on the Extracellular side of the membrane. The segment at residues 179–193 (TGAGMNPARSFAPAI) is an intramembrane region (discontinuously helical). The NPA 2 signature appears at 184-186 (NPA). Residues 194–200 (LTRNFTN) lie on the Extracellular side of the membrane. The helical transmembrane segment at 201-222 (HWVYWVGPIIGGGLGSLLYDFL) threads the bilayer. The Cytoplasmic portion of the chain corresponds to 223-263 (LFPRLKSVSERLSILKGARPSDSNGQPEGTGEPVELKTQAL). The segment at 227 to 237 (LKSVSERLSIL) is interaction with CALM. Residues serine 235, serine 243, and serine 245 each carry the phosphoserine modification. The disordered stretch occupies residues 240–263 (ARPSDSNGQPEGTGEPVELKTQAL). Asparagine 246 bears the Deamidated asparagine mark.

Belongs to the MIP/aquaporin (TC 1.A.8) family. Homotetramer; each monomer provides an independent water pore. Two homotetramers on opposing membranes can dimerize, forming a cell-cell junction. Interacts with CALM; the calcium-calmodulin/CALM complex interacts with the cytoplasmic domains of two aquaporins, leading to channel closure. Interacts with BFSP1 (via C-terminus); prevents calcium-dependent inhibition of the water channel activity. In terms of processing, subject to partial proteolytic cleavage in the eye lens core. Partial proteolysis promotes interactions between tetramers from adjoining membranes. Post-translationally, fatty acylated at Met-1 and Lys-238. The acyl modifications, in decreasing order of ion abundance, are: oleoyl (C18:1) &gt; palmitoyl (C16:0) &gt; stearoyl (C18:0) &gt; eicosenoyl (C20:1) &gt; dihomo-gamma-linolenoyl (C20:3) &gt; palmitoleoyl (C16:1) &gt; eicosadienoyl (C20:2).

The protein localises to the cell membrane. The protein resides in the cell junction. It carries out the reaction H2O(in) = H2O(out). With respect to regulation, the water channel activity is inhibited by calcium through calmodulin/CALM. Functionally, aquaporins form homotetrameric transmembrane channels, with each monomer independently mediating water transport across the plasma membrane along its osmotic gradient. Specifically expressed in lens fiber cells, this aquaporin is crucial for maintaining lens water homeostasis and transparency. Beyond water permeability, it also acts as a cell-to-cell adhesion molecule, forming thin junctions between lens fiber cells that are essential for maintaining the ordered structure and transparency of the lens. In Canis lupus familiaris (Dog), this protein is Lens fiber major intrinsic protein.